Reading from the N-terminus, the 542-residue chain is uncharacterized protein (542 aa).

The Extracellular portion of the chain corresponds to Met-1–Asp-78. A helical membrane pass occupies residues Leu-79–Ile-99. The Cytoplasmic segment spans residues Ala-100–Asn-119. A helical transmembrane segment spans residues Leu-120 to Ser-140. Over Lys-141–Arg-147 the chain is Extracellular. Residues Val-148–Asn-168 form a helical membrane-spanning segment. Over Arg-169–Arg-176 the chain is Cytoplasmic. The helical transmembrane segment at Cys-177–Tyr-197 threads the bilayer. The Extracellular portion of the chain corresponds to Tyr-198–Ser-208. The chain crosses the membrane as a helical span at residues Phe-209–Ile-229. At Glu-230–Gln-241 the chain is on the cytoplasmic side. A helical transmembrane segment spans residues Tyr-242–Met-262. Residues Arg-263 to Leu-326 are Extracellular-facing. Residues Phe-327 to Ile-347 form a helical membrane-spanning segment. At Leu-348 to Asn-359 the chain is on the cytoplasmic side. Residues Ile-360–Ser-380 traverse the membrane as a helical segment. The Extracellular portion of the chain corresponds to Arg-381 to Ser-387. The chain crosses the membrane as a helical span at residues Leu-388–Pro-408. Topologically, residues Thr-409–Lys-416 are cytoplasmic. A helical transmembrane segment spans residues Tyr-417–Val-437. The Extracellular segment spans residues Ser-438–Lys-482. Residues Ile-483–Ile-503 form a helical membrane-spanning segment. Topologically, residues Ser-504–His-542 are cytoplasmic.

The protein belongs to the major facilitator superfamily. Allantoate permease family.

The protein resides in the membrane. This is an uncharacterized protein from Saccharomyces cerevisiae (strain ATCC 204508 / S288c) (Baker's yeast).